The chain runs to 196 residues: Imidazole glycerol phosphate synthase subunit HisH (196 aa).

Positions 2-196 constitute a Glutamine amidotransferase type-1 domain; sequence KVVILDTGCA…AQLLKNFLEM (195 aa). Cys77 functions as the Nucleophile in the catalytic mechanism. Active-site residues include His178 and Glu180.

In terms of assembly, heterodimer of HisH and HisF.

It is found in the cytoplasm. The enzyme catalyses 5-[(5-phospho-1-deoxy-D-ribulos-1-ylimino)methylamino]-1-(5-phospho-beta-D-ribosyl)imidazole-4-carboxamide + L-glutamine = D-erythro-1-(imidazol-4-yl)glycerol 3-phosphate + 5-amino-1-(5-phospho-beta-D-ribosyl)imidazole-4-carboxamide + L-glutamate + H(+). It carries out the reaction L-glutamine + H2O = L-glutamate + NH4(+). It functions in the pathway amino-acid biosynthesis; L-histidine biosynthesis; L-histidine from 5-phospho-alpha-D-ribose 1-diphosphate: step 5/9. Its function is as follows. IGPS catalyzes the conversion of PRFAR and glutamine to IGP, AICAR and glutamate. The HisH subunit catalyzes the hydrolysis of glutamine to glutamate and ammonia as part of the synthesis of IGP and AICAR. The resulting ammonia molecule is channeled to the active site of HisF. In Pectobacterium atrosepticum (strain SCRI 1043 / ATCC BAA-672) (Erwinia carotovora subsp. atroseptica), this protein is Imidazole glycerol phosphate synthase subunit HisH.